Reading from the N-terminus, the 464-residue chain is NADH-quinone oxidoreductase subunit N 1 (464 aa).

The next 14 membrane-spanning stretches (helical) occupy residues 6–26, 33–53, 65–85, 98–118, 122–142, 155–175, 192–212, 237–257, 259–279, 285–305, 312–332, 356–376, 401–421, and 436–456; these read ILPEAILAIGILTVFILELFL, FLSVLAFIFVVLSGYSIFFVN, VDALNLIGKLFILAVTGFVLL, YGELPYLYLIATLGLMVMISS, AIIFTGLELASITMYILVGLF, YLVIGTTGTSMYALGSALVYA, FALGVILIISALALKVSAVPF, IGMYFLFVKLTMYLFSAFPDW, YVVMLLAVLSMFYGNIVAYAQ, LLAYSSIAHAGYFLTALTAVD, LLFYVFVYALATVGAFTVLAI, LASMLALFLFALIGIPPAAVF, ASLISAGYYLKVIVYMFLYSG, and FTVLGTAFLVIFFGLFPHVVL.

It belongs to the complex I subunit 2 family. In terms of assembly, NDH-1 is composed of 14 different subunits. Subunits NuoA, H, J, K, L, M, N constitute the membrane sector of the complex.

Its subcellular location is the cell inner membrane. It carries out the reaction a quinone + NADH + 5 H(+)(in) = a quinol + NAD(+) + 4 H(+)(out). Its function is as follows. NDH-1 shuttles electrons from NADH, via FMN and iron-sulfur (Fe-S) centers, to quinones in the respiratory chain. The immediate electron acceptor for the enzyme in this species is believed to be ubiquinone. Couples the redox reaction to proton translocation (for every two electrons transferred, four hydrogen ions are translocated across the cytoplasmic membrane), and thus conserves the redox energy in a proton gradient. The protein is NADH-quinone oxidoreductase subunit N 1 of Aquifex aeolicus (strain VF5).